We begin with the raw amino-acid sequence, 232 residues long: Peptidyl-prolyl cis-trans isomerase CYP26-1 (232 aa).

Residues 7–166 form the PPIase cyclophilin-type domain; the sequence is FFDLTVDGKP…KPVVIADCGE (160 aa). N-linked (GlcNAc...) asparagine glycosylation is present at Asn-108. The helical transmembrane segment at 212-232 threads the bilayer; the sequence is YYLINIVVACMVLMCFWSWFV.

The protein belongs to the cyclophilin-type PPIase family. Expressed only in flowers.

The protein localises to the membrane. It catalyses the reaction [protein]-peptidylproline (omega=180) = [protein]-peptidylproline (omega=0). Its function is as follows. PPIases accelerate the folding of proteins. It catalyzes the cis-trans isomerization of proline imidic peptide bonds in oligopeptides. The sequence is that of Peptidyl-prolyl cis-trans isomerase CYP26-1 (CYP26-1) from Arabidopsis thaliana (Mouse-ear cress).